A 306-amino-acid polypeptide reads, in one-letter code: MNLKQEKIAVLLGGTSAEREVSFNSGRAVLEALLKQGYNAHPIDPKEYNVANLKKDGFNRAFNILHGRGGEDGTMQGLLEQIGLPYTGCGVMASALTMDKMRTKMLWKAFGLPVADMKVVTRETFSELDPQAVVAKLGLPLMVKPSLEGSSVGLTKVKAVEELKSAVEYALKFDNTILIEEWLAGDELTVPVLDNQVLPAIRIVPEGEFYDYEAKYISDNTQYFCPAGLTPEREQELAILVKRAYDAVGCRGWSRIDVMCDAKGNFRLVEVNTNPGMTSHSLFPKSAATVGISFEQLVVKILELSL.

The 200-residue stretch at 104 to 303 folds into the ATP-grasp domain; that stretch reads KMLWKAFGLP…FEQLVVKILE (200 aa). Position 134–189 (134–189) interacts with ATP; the sequence is VAKLGLPLMVKPSLEGSSVGLTKVKAVEELKSAVEYALKFDNTILIEEWLAGDELT. Mg(2+)-binding residues include aspartate 257, glutamate 270, and asparagine 272.

Belongs to the D-alanine--D-alanine ligase family. The cofactor is Mg(2+). It depends on Mn(2+) as a cofactor.

Its subcellular location is the cytoplasm. It catalyses the reaction 2 D-alanine + ATP = D-alanyl-D-alanine + ADP + phosphate + H(+). It participates in cell wall biogenesis; peptidoglycan biosynthesis. Cell wall formation. This Haemophilus influenzae (strain PittGG) protein is D-alanine--D-alanine ligase.